A 196-amino-acid polypeptide reads, in one-letter code: uncharacterized protein (196 aa).

Residues 44–80 (RSVAVPGTEGKKAQNLRQLPAARLTYPTSSSTRPSHA) form a disordered region.

This is an uncharacterized protein from Treponema pallidum (strain Nichols).